The chain runs to 497 residues: METKLPPASTPTSPSSPGLSPVPPPDKVDGFSRRSLRRARPRRSHSSSQFRYQSNQQELTPLPLLKDVPASELHELLSRKLAQCGVMFDFLDCVADLKGKEVKRAALNELVECVGCTRGVLIEPVYPDIIRMISVNIFRTLPPSENPEFDPEEDEPNLEPSWPHLQLVYEFFLRFLESPDFQPSVAKRYVDQKFVLMLLELFDSEDPREREYLKTILHRVYGKFLGLRAYIRKQCNHIFLRFIYELEHFNGVAELLEILGSIINGFALPLKTEHKQFLVRVLIPLHSVKSLSVFHAQLAYCVVQFLEKDATLTEHVIRGLLKYWPKTCTQKEVMFLGEMEEILDVIEPSQFVKIQEPLFKQVARCVSSPHFQVAERALYFWNNEYILSLIEDNCHTVLPAVFGTLYQVSKEHWNQTIVSLIYNVLKTFMEMNGKLFDELTASYKLEKQQEQQKAQERQELWRGLEELRLRRLQGTQGAKEAPVPRPTPQVAASGGQS.

The span at 1 to 19 (METKLPPASTPTSPSSPGL) shows a compositional bias: low complexity. Disordered stretches follow at residues 1 to 55 (METK…YQSN) and 473 to 497 (QGTQGAKEAPVPRPTPQVAASGGQS). S32, S35, S44, S46, S47, and S48 each carry phosphoserine. Residues 34-45 (RSLRRARPRRSH) are compositionally biased toward basic residues.

It belongs to the phosphatase 2A regulatory subunit B56 family. In terms of assembly, component of the serine/threonine-protein phosphatase 2A complex (PP2A). This complex consists of a common heterodimeric core enzyme, composed of a 36 kDa catalytic subunit (subunit C) and a 65 kDa constant scaffold subunit (PR65 or subunit A), that associates with a variety of regulatory subunits. Proteins that associate with the core dimer include three families of regulatory subunits B (the R2/B/PR55/B55, R3/B''/PR72/PR130/PR59 and R5/B'/B56 families), the 48 kDa variable regulatory subunit, viral proteins, and cell signaling molecules. Interacts with SGO1. Interacts with AKT1. Ubiquitinated by CUL3-KLHL15 complex; this modification leads to proteasomal degradation.

It is found in the cytoplasm. As the regulatory component of the serine/threonine-protein phosphatase 2A (PP2A) holoenzyme, modulates substrate specificity, subcellular localization, and responsiveness to phosphorylation. The phosphorylated form mediates the interaction between PP2A and AKT1, leading to AKT1 dephosphorylation. The sequence is that of Serine/threonine-protein phosphatase 2A 56 kDa regulatory subunit beta isoform (Ppp2r5b) from Mus musculus (Mouse).